Consider the following 541-residue polypeptide: Glucose-6-phosphate isomerase (541 aa).

The active-site Proton donor is Glu-346. Catalysis depends on residues His-377 and Lys-506.

It belongs to the GPI family.

It is found in the cytoplasm. The catalysed reaction is alpha-D-glucose 6-phosphate = beta-D-fructose 6-phosphate. It functions in the pathway carbohydrate biosynthesis; gluconeogenesis. The protein operates within carbohydrate degradation; glycolysis; D-glyceraldehyde 3-phosphate and glycerone phosphate from D-glucose: step 2/4. In terms of biological role, catalyzes the reversible isomerization of glucose-6-phosphate to fructose-6-phosphate. The polypeptide is Glucose-6-phosphate isomerase (Rhizobium etli (strain CIAT 652)).